The primary structure comprises 200 residues: uncharacterized protein (200 aa).

The tract at residues 149–200 (APDPGGSVATEEVLRSDDRDSHTQDSASEWPEGNDSVGSAAMRIDLSRIGGT) is disordered. The segment covering 160–171 (EVLRSDDRDSHT) has biased composition (basic and acidic residues).

This sequence to A.tumefaciens Ti plasmid conjugal transfer region I ORFR2 and ORFR3.

This is an uncharacterized protein from Sinorhizobium fredii (strain NBRC 101917 / NGR234).